Consider the following 485-residue polypeptide: REST corepressor 1 (485 aa).

Disordered stretches follow at residues 1–26 (MPAM…ASAS) and 49–110 (AAAS…VGPQ). Composition is skewed to low complexity over residues 49-64 (AAAS…AAAA) and 74-95 (AAAA…SGSS). The interaction with HDAC1 stretch occupies residues 78-257 (PNGNSSSNSW…RHARKQKRER (180 aa)). The region spanning 103–189 (GGMRVGPQYQ…KSLADLPNFT (87 aa)) is the ELM2 domain. Residue lysine 122 forms a Glycyl lysine isopeptide (Lys-Gly) (interchain with G-Cter in SUMO2) linkage. At serine 127 the chain carries Phosphoserine. One can recognise an SANT 1 domain in the interval 190-241 (PFPDEWTVEDKVLFEQAFSFHGKTFHRIQQMLPDKSIASLVKFYYSWKKTRT). The stretch at 244–273 (SVMDRHARKQKREREESEDELEEANGNNPI) forms a coiled coil. A disordered region spans residues 244 to 314 (SVMDRHARKQ…AKNRAKRKPP (71 aa)). At serine 260 the chain carries Phosphoserine. Positions 278-288 (DQNKESKKEVP) are enriched in basic and acidic residues. The interaction with KDM1A stretch occupies residues 296–384 (VKKEKHSTQA…LPEVIQKCNA (89 aa)). A Glycyl lysine isopeptide (Lys-Gly) (interchain with G-Cter in SUMO2) cross-link involves residue lysine 297. Residues 334–369 (ATTVLRQLDMELVSVKRQIQNIKQTNSALKEKLDGG) are a coiled coil. An SANT 2 domain is found at 381–432 (KCNARWTTEEQLLAVQAIRKYGRDFQAISDVIGNKSVVQVKNFFVNYRRRFN). Residues 442-485 (AEHGKEETNGPSNQKPVKSPDNSIKMPEEEDEAPVLDVRYASAS) form a disordered region. Positions 450 to 463 (NGPSNQKPVKSPDN) are enriched in polar residues. At serine 460 the chain carries Phosphoserine. Lysine 466 participates in a covalent cross-link: Glycyl lysine isopeptide (Lys-Gly) (interchain with G-Cter in SUMO2).

This sequence belongs to the CoREST family. Interacts directly with GFI1 and GFI1B in a RCOR/GFI/KDM1A/HDAC complex. Interacts with INMS1. Component of a BHC histone deacetylase complex that contains HDAC1, HDAC2, HMG20B/BRAF35, KDM1A, RCOR1/CoREST and PHF21A/BHC80. The BHC complex may also contain ZMYM2, ZNF217, ZMYM3, GSE1 and GTF2I. Interacts with REST. Interacts with the SMARCE1/BAF57, suggesting that the BHC complex may recruit the ATP-dependent chromatin-remodeling SWI-SNF complex. Interacts with SOX2. In terms of assembly, (Microbial infection) Interacts with herpes virus HSV-1 ICP0 protein; the interaction leads to the disruption of the BHC complex, thereby preventing the BHC complex from repressing transcription of viral genes. Phosphorylated by HSV-1 protein kinases in case of infection. In terms of tissue distribution, ubiquitously expressed.

It localises to the nucleus. In terms of biological role, essential component of the BHC complex, a corepressor complex that represses transcription of neuron-specific genes in non-neuronal cells. The BHC complex is recruited at RE1/NRSE sites by REST and acts by deacetylating and demethylating specific sites on histones, thereby acting as a chromatin modifier. In the BHC complex, it serves as a molecular beacon for the recruitment of molecular machinery, including MeCP2 and SUV39H1, that imposes silencing across a chromosomal interval. Plays a central role in demethylation of Lys-4 of histone H3 by promoting demethylase activity of KDM1A on core histones and nucleosomal substrates. It also protects KDM1A from the proteasome. Component of a RCOR/GFI/KDM1A/HDAC complex that suppresses, via histone deacetylase (HDAC) recruitment, a number of genes implicated in multilineage blood cell development and controls hematopoietic differentiation. This is REST corepressor 1 (RCOR1) from Homo sapiens (Human).